A 277-amino-acid polypeptide reads, in one-letter code: Large ribosomal subunit protein uL2 (277 aa).

Disordered regions lie at residues 24–55 (ITTS…RHHG) and 221–277 (RGSV…RKKK).

It belongs to the universal ribosomal protein uL2 family. In terms of assembly, part of the 50S ribosomal subunit. Forms a bridge to the 30S subunit in the 70S ribosome.

Its function is as follows. One of the primary rRNA binding proteins. Required for association of the 30S and 50S subunits to form the 70S ribosome, for tRNA binding and peptide bond formation. It has been suggested to have peptidyltransferase activity; this is somewhat controversial. Makes several contacts with the 16S rRNA in the 70S ribosome. This is Large ribosomal subunit protein uL2 from Listeria welshimeri serovar 6b (strain ATCC 35897 / DSM 20650 / CCUG 15529 / CIP 8149 / NCTC 11857 / SLCC 5334 / V8).